Consider the following 383-residue polypeptide: MARLTLDDVTKVYTDEGGGDIVAVEEISLDIDDGEFLVLVGPSGCGKSTTLRMMAGLETVTEGELRLEDRVLNGVSAQDRDIAMVFQSYALYPHKSVRGNMSFGLEESTGLPDDEIRQRVEETTDMLGISDLLDRKPGQLSGGQQQRVALGRAIVRDPEVFLMDEPLSNLDAKLRAEMRTELQRLQGELGVTTVYVTHDQTEAMTMGDRVAVLDDGELQQVGTPLDCYHRPNNLFVAGFIGEPSMNLFDGSLSGDTFRGDGFDYPLSGATRDQLGGASGLTLGIRPEDVTVGERRSGQRTFDAEVVVVEPQGNENAVHLRFVDGDEGTQFTATTTGQSRVEAGDRTTVSFPEDAIHLFDGETGDALKNRELPSNRAIDAFVSN.

Residues 4 to 240 (LTLDDVTKVY…PNNLFVAGFI (237 aa)) form the ABC transporter domain. 41–48 (GPSGCGKS) is a binding site for ATP.

The protein belongs to the ABC transporter superfamily. Carbohydrate uptake transporter-1 (CUT1) (TC 3.A.1.1) family. In terms of assembly, the complex is composed of two ATP-binding proteins (XacJ and XacK), two transmembrane proteins (XacH and XacI) and a solute-binding protein (XacG).

It is found in the cell membrane. It carries out the reaction D-xylose(out) + ATP + H2O = D-xylose(in) + ADP + phosphate + H(+). It catalyses the reaction L-arabinose(out) + ATP + H2O = L-arabinose(in) + ADP + phosphate + H(+). Functionally, part of the ABC transporter complex XacGHIJK involved in the uptake of xylose and arabinose. Responsible for energy coupling to the transport system. The chain is Xylose/arabinose import ATP-binding protein XacK from Haloferax volcanii (strain ATCC 29605 / DSM 3757 / JCM 8879 / NBRC 14742 / NCIMB 2012 / VKM B-1768 / DS2) (Halobacterium volcanii).